The following is an 87-amino-acid chain: Antitoxin YefM (87 aa).

This sequence belongs to the phD/YefM antitoxin family. Forms a complex with YoeB which inhibits its toxin activity.

Antitoxin component of a type II toxin-antitoxin (TA) system. A probable antitoxin for the putative mRNA interferase YeoB. In Streptomyces coelicolor (strain ATCC BAA-471 / A3(2) / M145), this protein is Antitoxin YefM.